The sequence spans 178 residues: Adenine phosphoribosyltransferase (178 aa).

This sequence belongs to the purine/pyrimidine phosphoribosyltransferase family. Homodimer.

Its subcellular location is the cytoplasm. The catalysed reaction is AMP + diphosphate = 5-phospho-alpha-D-ribose 1-diphosphate + adenine. Its pathway is purine metabolism; AMP biosynthesis via salvage pathway; AMP from adenine: step 1/1. Its function is as follows. Catalyzes a salvage reaction resulting in the formation of AMP, that is energically less costly than de novo synthesis. The sequence is that of Adenine phosphoribosyltransferase from Cereibacter sphaeroides (strain ATCC 17029 / ATH 2.4.9) (Rhodobacter sphaeroides).